A 179-amino-acid chain; its full sequence is Large ribosomal subunit protein uL6 (179 aa).

Belongs to the universal ribosomal protein uL6 family. In terms of assembly, part of the 50S ribosomal subunit.

Functionally, this protein binds to the 23S rRNA, and is important in its secondary structure. It is located near the subunit interface in the base of the L7/L12 stalk, and near the tRNA binding site of the peptidyltransferase center. The chain is Large ribosomal subunit protein uL6 from Desulfovibrio desulfuricans (strain ATCC 27774 / DSM 6949 / MB).